Consider the following 844-residue polypeptide: Penicillin-binding protein 1B (844 aa).

A compositionally biased stretch (basic and acidic residues) spans 1 to 10; that stretch reads MAGNDREPIG. The tract at residues 1-60 is disordered; sequence MAGNDREPIGRKGKPTRPVKQKVSRRRYEDDDDYDDYDDYEDEEPMPRKGKGKGKGRKPR. The Cytoplasmic portion of the chain corresponds to 1 to 63; it reads MAGNDREPIG…GKGRKPRGKR (63 aa). Basic residues predominate over residues 11–25; the sequence is RKGKPTRPVKQKVSR. Positions 30–44 are enriched in acidic residues; that stretch reads DDDDYDDYDDYEDEE. The span at 48–60 shows a compositional bias: basic residues; it reads RKGKGKGKGRKPR. Residues 64–87 form a helical; Signal-anchor for type II membrane protein membrane-spanning segment; that stretch reads GWLWLLLKLAIVFAVLIAIYGVYL. The membrane association stretch occupies residues 88 to 250; it reads DQKIRSRIDG…DGISLYSIGR (163 aa). Topologically, residues 88–844 are periplasmic; sequence DQKIRSRIDG…GWIKDMFGSN (757 aa). The interval 109 to 200 is uvrB domain 2 homolog; it reads RMVNLEPDMT…QFGFFRLDPR (92 aa). The tract at residues 195 to 367 is transglycosylase; sequence FRLDPRLITM…SIYNPWRNPK (173 aa). Glu-233 serves as the catalytic Proton donor; for transglycosylase activity. The tract at residues 444–736 is transpeptidase; that stretch reads SVAQDAAEKA…NNQPTKLYGA (293 aa). Residue Ser-510 is the Acyl-ester intermediate; for transpeptidase activity of the active site. A compositionally biased stretch (low complexity) spans 793 to 825; it reads LCQQSEMQQQPSGNPFDQSSQPQQQPQQQPAQQ. Positions 793-835 are disordered; sequence LCQQSEMQQQPSGNPFDQSSQPQQQPQQQPAQQEQKDSDGVAG.

It in the N-terminal section; belongs to the glycosyltransferase 51 family. The protein in the C-terminal section; belongs to the transpeptidase family. In terms of assembly, forms a trimeric complex with MipA and MltA. Has also been shown to exist as monomer or homodimer; homodimer of Alpha and Gamma isozymes can be found. Interacts with UvrA, FtsL and FtsN.

The protein localises to the cell inner membrane. It catalyses the reaction [GlcNAc-(1-&gt;4)-Mur2Ac(oyl-L-Ala-gamma-D-Glu-L-Lys-D-Ala-D-Ala)](n)-di-trans,octa-cis-undecaprenyl diphosphate + beta-D-GlcNAc-(1-&gt;4)-Mur2Ac(oyl-L-Ala-gamma-D-Glu-L-Lys-D-Ala-D-Ala)-di-trans,octa-cis-undecaprenyl diphosphate = [GlcNAc-(1-&gt;4)-Mur2Ac(oyl-L-Ala-gamma-D-Glu-L-Lys-D-Ala-D-Ala)](n+1)-di-trans,octa-cis-undecaprenyl diphosphate + di-trans,octa-cis-undecaprenyl diphosphate + H(+). The enzyme catalyses Preferential cleavage: (Ac)2-L-Lys-D-Ala-|-D-Ala. Also transpeptidation of peptidyl-alanyl moieties that are N-acyl substituents of D-alanine.. It participates in cell wall biogenesis; peptidoglycan biosynthesis. Its function is as follows. Cell wall formation. Synthesis of cross-linked peptidoglycan from the lipid intermediates. The enzyme has a penicillin-insensitive transglycosylase N-terminal domain (formation of linear glycan strands) and a penicillin-sensitive transpeptidase C-terminal domain (cross-linking of the peptide subunits). This Escherichia coli (strain K12) protein is Penicillin-binding protein 1B (mrcB).